A 264-amino-acid chain; its full sequence is tRNA pseudouridine synthase A (264 aa).

D51 (nucleophile) is an active-site residue. Position 109 (Y109) interacts with substrate.

The protein belongs to the tRNA pseudouridine synthase TruA family. As to quaternary structure, homodimer.

It carries out the reaction uridine(38/39/40) in tRNA = pseudouridine(38/39/40) in tRNA. Its function is as follows. Formation of pseudouridine at positions 38, 39 and 40 in the anticodon stem and loop of transfer RNAs. The sequence is that of tRNA pseudouridine synthase A from Yersinia pseudotuberculosis serotype O:1b (strain IP 31758).